Here is a 266-residue protein sequence, read N- to C-terminus: ATP synthase subunit a (266 aa).

Helical transmembrane passes span 38–58 (KQML…ILAA), 99–119 (LLFS…IPVI), 126–146 (HVGG…IIGI), 162–182 (GVPW…NFLV), 191–211 (LFAT…GIEF), and 224–244 (SVLV…IMAL).

This sequence belongs to the ATPase A chain family. In terms of assembly, F-type ATPases have 2 components, CF(1) - the catalytic core - and CF(0) - the membrane proton channel. CF(1) has five subunits: alpha(3), beta(3), gamma(1), delta(1), epsilon(1). CF(0) has three main subunits: a(1), b(2) and c(9-12). The alpha and beta chains form an alternating ring which encloses part of the gamma chain. CF(1) is attached to CF(0) by a central stalk formed by the gamma and epsilon chains, while a peripheral stalk is formed by the delta and b chains.

The protein resides in the cell membrane. Its function is as follows. Key component of the proton channel; it plays a direct role in the translocation of protons across the membrane. The sequence is that of ATP synthase subunit a from Paenarthrobacter aurescens (strain TC1).